The chain runs to 786 residues: Cyclin-F (786 aa).

The short motif at 20-28 (KRRIRRRPR) is the Nuclear localization signal 1 element. An F-box domain is found at 29–76 (NLTILSLPEDVLFHILKWLSVEDILAVRAVHSQLKDLVDNHASVWACA). Residues 288–405 (QASQAVSKQQ…EIVSALEGKI (118 aa)) form the Cyclin N-terminal domain. Short sequence motifs (d box) lie at residues 310–313 (RYIL), 343–346 (RRRL), 349–352 (RYRL), and 351–354 (RLQL). 2 disordered regions span residues 564 to 593 (SPSGRRTKRKRENSLQEDRGSFVTTPTAEL) and 675 to 738 (TQIP…HTQP). The short motif at 568 to 574 (RRTKRKR) is the Nuclear localization signal 2 element. The PEST stretch occupies residues 582-766 (RGSFVTTPTA…ESSVPQQQVK (185 aa)). Positions 697-714 (VTTSGYSSVSTASPTSSV) are enriched in low complexity. The span at 723–738 (QPTSVLSLDSDSHTQP) shows a compositional bias: polar residues. Residues 767-770 (RINL) carry the D box 5 motif.

This sequence belongs to the cyclin family. Cyclin AB subfamily. Component of the SCF(CCNF) complex consisting of CUL1, RBX1, SKP1 and CCNF. Interacts with SKP1. Interacts with CUL1. Interacts with CCNB1; interaction is required for nuclear localization of CCNB1. Interacts with CCP110; this interaction leads to CCP110 ubiquitination and degradation via the proteasome pathway. Interacts (via the Cyclin N-terminal domain) with MYBL2/BMYB. Interacts with FZR1/CDH1 (via N-terminus). Interacts with RRM2 (via Cy motif and when phosphorylated at 'Thr-33'); the interaction occurs exclusively in G2 and early M. Interacts with CDC6 (via Cy motif); the interaction takes place during G2 and M phase. Post-translationally, degraded when the spindle assembly checkpoint is activated during the G2-M transition. Degradation depends on the C-terminal PEST sequence. In terms of processing, phosphorylated just before cells enter into mitosis. Ubiquitinated by the anaphase-promoting complex (APC/C); leading to its degradation by the proteasome. In terms of tissue distribution, widely expressed, with expression detected in the heart, brain, placenta, lung, liver, skeletal muscle, kidney and pancreas.

Its subcellular location is the nucleus. It localises to the cytoplasm. The protein localises to the perinuclear region. The protein resides in the cytoskeleton. It is found in the microtubule organizing center. Its subcellular location is the centrosome. It localises to the centriole. Its function is as follows. Substrate recognition component of a SCF (SKP1-CUL1-F-box protein) E3 ubiquitin-protein ligase complex which mediates the ubiquitination and subsequent proteasomal degradation of target proteins. The SCF(CCNF) E3 ubiquitin-protein ligase complex is an integral component of the ubiquitin proteasome system (UPS) and links proteasome degradation to the cell cycle. Mediates the substrate recognition and the proteasomal degradation of various target proteins involved in the regulation of cell cycle progression and in the maintenance of genome stability. Mediates the ubiquitination and proteasomal degradation of CP110 during G2 phase, thereby acting as an inhibitor of centrosome reduplication. In G2, mediates the ubiquitination and subsequent degradation of ribonucleotide reductase RRM2, thereby maintaining a balanced pool of dNTPs and genome integrity. In G2, mediates the ubiquitination and proteasomal degradation of CDC6, thereby suppressing DNA re-replication and preventing genome instability. Involved in the ubiquitination and degradation of the substrate adapter CDH1 of the anaphase-promoting complex (APC/C), thereby acting as an antagonist of APC/C in regulating G1 progression and S phase entry. May play a role in the G2 cell cycle checkpoint control after DNA damage, possibly by promoting the ubiquitination of MYBL2/BMYB. This chain is Cyclin-F (CCNF), found in Homo sapiens (Human).